Here is a 103-residue protein sequence, read N- to C-terminus: Colicin-V (103 aa).

Residues Met-1 to Gly-15 constitute a propeptide that is removed on maturation. Cys-91 and Cys-102 form a disulfide bridge.

Its subcellular location is the secreted. Functionally, colicin V kills sensitive cells by disrupting the membrane potential. Colicins are polypeptide toxins produced by, and active against E.coli and closely related bacteria. This chain is Colicin-V (cvaC), found in Escherichia coli.